A 157-amino-acid polypeptide reads, in one-letter code: 6,7-dimethyl-8-ribityllumazine synthase 1 (157 aa).

5-amino-6-(D-ribitylamino)uracil is bound by residues F22, 53-55 (ALE), and 82-84 (TVI). 87-88 (ET) contacts (2S)-2-hydroxy-3-oxobutyl phosphate. H90 serves as the catalytic Proton donor. Position 115 (N115) interacts with 5-amino-6-(D-ribitylamino)uracil. R129 is a binding site for (2S)-2-hydroxy-3-oxobutyl phosphate.

Belongs to the DMRL synthase family. As to quaternary structure, homopentamer.

It catalyses the reaction (2S)-2-hydroxy-3-oxobutyl phosphate + 5-amino-6-(D-ribitylamino)uracil = 6,7-dimethyl-8-(1-D-ribityl)lumazine + phosphate + 2 H2O + H(+). The protein operates within cofactor biosynthesis; riboflavin biosynthesis; riboflavin from 2-hydroxy-3-oxobutyl phosphate and 5-amino-6-(D-ribitylamino)uracil: step 1/2. Catalyzes the formation of 6,7-dimethyl-8-ribityllumazine by condensation of 5-amino-6-(D-ribitylamino)uracil with 3,4-dihydroxy-2-butanone 4-phosphate. This is the penultimate step in the biosynthesis of riboflavin. The sequence is that of 6,7-dimethyl-8-ribityllumazine synthase 1 (ribH1) from Brucella melitensis biotype 1 (strain ATCC 23456 / CCUG 17765 / NCTC 10094 / 16M).